The sequence spans 285 residues: Glutamate racemase (285 aa).

Substrate-binding positions include 28 to 29 (DS) and 60 to 61 (YG). Cys92 serves as the catalytic Proton donor/acceptor. Residue 93–94 (NT) coordinates substrate. Residue Cys204 is the Proton donor/acceptor of the active site. Residue 205 to 206 (TH) participates in substrate binding.

The protein belongs to the aspartate/glutamate racemases family.

It carries out the reaction L-glutamate = D-glutamate. It participates in cell wall biogenesis; peptidoglycan biosynthesis. Functionally, provides the (R)-glutamate required for cell wall biosynthesis. The chain is Glutamate racemase from Escherichia coli O6:H1 (strain CFT073 / ATCC 700928 / UPEC).